We begin with the raw amino-acid sequence, 1220 residues long: Deubiquitinating protein VCPIP1 (1220 aa).

The span at Met-1–Ala-19 shows a compositional bias: pro residues. Residues Met-1–Asp-40 form a disordered region. The span at Pro-20–Leu-35 shows a compositional bias: low complexity. An OTU domain is found at Leu-207 to Ile-360. Residue Asp-215 is part of the active site. The active-site Nucleophile is Cys-218. The active site involves His-353. The residue at position 407 (Lys-407) is an N6-acetyllysine. Disordered regions lie at residues Ser-724–Ile-778 and Glu-988–Gly-1008. Phosphoserine is present on residues Ser-746 and Ser-756. The segment covering Pro-754–Thr-770 has biased composition (low complexity). Thr-762 is subject to Phosphothreonine. A phosphoserine mark is found at Ser-767, Ser-993, Ser-997, and Ser-1076. 2 disordered regions span residues Ser-1113–Val-1140 and Phe-1185–Ser-1220. Phosphoserine occurs at positions 1196 and 1205. Acidic residues predominate over residues Met-1197–Asp-1207. Residues Ala-1208–Ser-1220 show a composition bias toward polar residues.

Binds VCP and the ternary complex containing STX5A, NSFL1C and VCP. In terms of processing, phosphorylated at Ser-1205 by ATM or ATR following induction of covalent DNA-protein cross-links (DPCs).

It localises to the nucleus. It is found in the cytoplasm. Its subcellular location is the endoplasmic reticulum. The protein resides in the golgi apparatus. The protein localises to the golgi stack. It carries out the reaction Thiol-dependent hydrolysis of ester, thioester, amide, peptide and isopeptide bonds formed by the C-terminal Gly of ubiquitin (a 76-residue protein attached to proteins as an intracellular targeting signal).. Functionally, deubiquitinating enzyme involved in DNA repair and reassembly of the Golgi apparatus and the endoplasmic reticulum following mitosis. Necessary for VCP-mediated reassembly of Golgi stacks after mitosis. Plays a role in VCP-mediated formation of transitional endoplasmic reticulum (tER). Mediates dissociation of the ternary complex containing STX5A, NSFL1C and VCP. Also involved in DNA repair following phosphorylation by ATM or ATR: acts by catalyzing deubiquitination of SPRTN, thereby promoting SPRTN recruitment to chromatin and subsequent proteolytic cleavage of covalent DNA-protein cross-links (DPCs). Hydrolyzes 'Lys-11'- and 'Lys-48'-linked polyubiquitin chains. This Mus musculus (Mouse) protein is Deubiquitinating protein VCPIP1.